The chain runs to 252 residues: 2-succinyl-6-hydroxy-2,4-cyclohexadiene-1-carboxylate synthase (252 aa).

Belongs to the AB hydrolase superfamily. MenH family. Monomer.

The catalysed reaction is 5-enolpyruvoyl-6-hydroxy-2-succinyl-cyclohex-3-ene-1-carboxylate = (1R,6R)-6-hydroxy-2-succinyl-cyclohexa-2,4-diene-1-carboxylate + pyruvate. It functions in the pathway quinol/quinone metabolism; 1,4-dihydroxy-2-naphthoate biosynthesis; 1,4-dihydroxy-2-naphthoate from chorismate: step 3/7. The protein operates within quinol/quinone metabolism; menaquinone biosynthesis. Catalyzes a proton abstraction reaction that results in 2,5-elimination of pyruvate from 2-succinyl-5-enolpyruvyl-6-hydroxy-3-cyclohexene-1-carboxylate (SEPHCHC) and the formation of 2-succinyl-6-hydroxy-2,4-cyclohexadiene-1-carboxylate (SHCHC). The polypeptide is 2-succinyl-6-hydroxy-2,4-cyclohexadiene-1-carboxylate synthase (Salmonella typhimurium (strain LT2 / SGSC1412 / ATCC 700720)).